A 305-amino-acid polypeptide reads, in one-letter code: UDP-3-O-acyl-N-acetylglucosamine deacetylase (305 aa).

Zn(2+) contacts are provided by His77, His234, and Asp238. His261 serves as the catalytic Proton donor.

This sequence belongs to the LpxC family. Zn(2+) serves as cofactor.

It catalyses the reaction a UDP-3-O-[(3R)-3-hydroxyacyl]-N-acetyl-alpha-D-glucosamine + H2O = a UDP-3-O-[(3R)-3-hydroxyacyl]-alpha-D-glucosamine + acetate. It participates in glycolipid biosynthesis; lipid IV(A) biosynthesis; lipid IV(A) from (3R)-3-hydroxytetradecanoyl-[acyl-carrier-protein] and UDP-N-acetyl-alpha-D-glucosamine: step 2/6. Catalyzes the hydrolysis of UDP-3-O-myristoyl-N-acetylglucosamine to form UDP-3-O-myristoylglucosamine and acetate, the committed step in lipid A biosynthesis. In Oleidesulfovibrio alaskensis (strain ATCC BAA-1058 / DSM 17464 / G20) (Desulfovibrio alaskensis), this protein is UDP-3-O-acyl-N-acetylglucosamine deacetylase.